The sequence spans 440 residues: 5-hydroxytryptamine receptor 6 (440 aa).

At 1-27 (MVPEPGPTANSTPAWGAGPPSAPGGSG) the chain is on the extracellular side. The chain crosses the membrane as a helical span at residues 28 to 52 (WVAAALCVVIALTAAANSLLIALIC). Topologically, residues 53 to 62 (TQPALRNTSN) are cytoplasmic. Residues 63–88 (FFLVSLFTSDLMVGLVVMPPAMLNAL) form a helical membrane-spanning segment. Over 89 to 96 (YGRWVLAR) the chain is Extracellular. Residues 97 to 122 (GLCLLWTAFDVMCCSASILNLCLISL) form a helical membrane-spanning segment. A disulfide bridge connects residues Cys99 and Cys180. Position 106 (Asp106) interacts with serotonin. Topologically, residues 123–142 (DRYLLILSPLRYKLRMTPLR) are cytoplasmic. Residues 143-167 (ALALVLGAWSLAALASFLPLLLGWH) traverse the membrane as a helical segment. The Extracellular segment spans residues 168-185 (ELGHARPPVPGQCRLLAS). A helical transmembrane segment spans residues 186–209 (LPFVLVASGLTFFLPSGAICFTYC). The Cytoplasmic segment spans residues 210–266 (RILLAARKQAVQVASLTTGMASQASETLQVPRTPRPGVESADSRRLATKHSRKALKA). A helical transmembrane segment spans residues 267–293 (SLTLGILLGMFFVTWLPFFVANIVQAV). Asn288 serves as a coordination point for serotonin. Residues 294 to 299 (CDCISP) are Extracellular-facing. The chain crosses the membrane as a helical span at residues 300–323 (GLFDVLTWLGYCNSTMNPIIYPLF). At 324-440 (MRDFKRALGR…RPHPLGIPTN (117 aa)) the chain is on the cytoplasmic side. Residues 346-392 (ASLASPSLRTSHSGPRPGLSLQQVLPLPLPPDSDSDSDAGSGGSSGL) form a disordered region. Residues 347 to 358 (SLASPSLRTSHS) show a composition bias toward polar residues. Low complexity predominate over residues 362 to 371 (PGLSLQQVLP).

It belongs to the G-protein coupled receptor 1 family. As to quaternary structure, interacts with MTOR, RPTOR and NF1. Interacts with CDK5. As to expression, expressed in several human brain regions, most prominently in the caudate nucleus.

It localises to the cell membrane. Its function is as follows. G-protein coupled receptor for 5-hydroxytryptamine (serotonin), a biogenic hormone that functions as a neurotransmitter, a hormone and a mitogen. Also has a high affinity for tricyclic psychotropic drugs. Ligand binding causes a conformation change that triggers signaling via guanine nucleotide-binding proteins (G proteins) and modulates the activity of downstream effectors. HTR6 is coupled to G(s) G alpha proteins and mediates activation of adenylate cyclase activity. Controls pyramidal neurons migration during corticogenesis, through the regulation of CDK5 activity. Is an activator of mTOR signaling. This is 5-hydroxytryptamine receptor 6 from Homo sapiens (Human).